We begin with the raw amino-acid sequence, 274 residues long: Exosome complex component Rrp42 (274 aa).

The protein belongs to the RNase PH family. Rrp42 subfamily. As to quaternary structure, component of the archaeal exosome complex. Forms a hexameric ring-like arrangement composed of 3 Rrp41-Rrp42 heterodimers. The hexameric ring associates with a trimer of Rrp4 and/or Csl4 subunits.

It localises to the cytoplasm. Its function is as follows. Non-catalytic component of the exosome, which is a complex involved in RNA degradation. Contributes to the structuring of the Rrp41 active site. The protein is Exosome complex component Rrp42 of Pyrococcus horikoshii (strain ATCC 700860 / DSM 12428 / JCM 9974 / NBRC 100139 / OT-3).